An 859-amino-acid polypeptide reads, in one-letter code: Cadherin-related family member 1 (859 aa).

A signal peptide spans 1-21 (MRRGPQVALVLGLLCIYLAQA). The Extracellular portion of the chain corresponds to 22 to 701 (NFAPHFFDNG…LIQTKDNPMK (680 aa)). Cadherin domains are found at residues 36–135 (NGNM…APRF), 136–247 (LQEP…APIF), 248–354 (VGTP…PPTF), 360–473 (PQNK…VPKF), 474–577 (TSHY…YPQF), and 569–691 (DVND…MAAF). N-linked (GlcNAc...) asparagine glycans are attached at residues Asn58 and Asn89. N-linked (GlcNAc...) asparagine glycosylation is found at Asn288 and Asn297. A helical membrane pass occupies residues 702-722 (AVGVLAGVMAIVVAITVLIST). Residues 723 to 859 (ATFWRNKKSN…KKSLGNKAYV (137 aa)) lie on the Cytoplasmic side of the membrane. The interval 789 to 859 (PPRAPALPPP…KKSLGNKAYV (71 aa)) is disordered. The segment covering 790 to 800 (PRAPALPPPPK) has biased composition (pro residues). Positions 802 to 816 (ASSTVAQQTVPTVSG) are enriched in polar residues. The span at 817–827 (SLTPQPSQQLP) shows a compositional bias: low complexity.

In terms of assembly, interacts with PROM1. In terms of processing, undergoes proteolytic cleavage; produces a soluble 95 kDa N-terminal fragment and a 25 kDa cell-associated C-terminal fragment. Expressed in the retina. Strongly expressed by the mitral and tufted cells in the main and accessory olfactory bulbs. Also expressed in the septum and olfactory cortex. Weakly expressed in the triangular septal nucleus and piriform cortex.

It is found in the cell membrane. Potential calcium-dependent cell-adhesion protein. May be required for the structural integrity of the outer segment (OS) of photoreceptor cells. The sequence is that of Cadherin-related family member 1 (Cdhr1) from Rattus norvegicus (Rat).